Reading from the N-terminus, the 308-residue chain is Methionyl-tRNA formyltransferase (308 aa).

109–112 lines the (6S)-5,6,7,8-tetrahydrofolate pocket; it reads SLLP.

The protein belongs to the Fmt family.

It carries out the reaction L-methionyl-tRNA(fMet) + (6R)-10-formyltetrahydrofolate = N-formyl-L-methionyl-tRNA(fMet) + (6S)-5,6,7,8-tetrahydrofolate + H(+). Attaches a formyl group to the free amino group of methionyl-tRNA(fMet). The formyl group appears to play a dual role in the initiator identity of N-formylmethionyl-tRNA by promoting its recognition by IF2 and preventing the misappropriation of this tRNA by the elongation apparatus. This Salinispora arenicola (strain CNS-205) protein is Methionyl-tRNA formyltransferase.